A 282-amino-acid chain; its full sequence is Homeobox protein CDX-4 (282 aa).

Disordered regions lie at residues 13-36 and 98-156; these read MYPG…GGSG and MNDM…SPYA. The span at 20–29 shows a compositional bias: low complexity; the sequence is SPGGSSTAGV. Polar residues-rich tracts occupy residues 110–124 and 133–148; these read DYST…SNGG and SLVS…TSPS. A DNA-binding region (homeobox) is located at residues 171–230; sequence KEKYRVVYTDHQRLELEKEFHCNRYITIRRKSELAVNLGLSERQVKIWFQNRRAKERKMI.

This sequence belongs to the Caudal homeobox family.

It localises to the nucleus. The protein is Homeobox protein CDX-4 (Cdx4) of Mus musculus (Mouse).